The chain runs to 631 residues: Leukocyte immunoglobulin-like receptor subfamily B member 3 (631 aa).

An N-terminal signal peptide occupies residues 1–23 (MTPALTALLCLGLSLGPRTRVQA). Residues 24–443 (GPFPKPTLWA…STPGLGRYLE (420 aa)) are Extracellular-facing. Ig-like C2-type domains follow at residues 42–100 (GSPV…RCHY), 111–229 (DPLE…SLLT), 225–314 (PSLL…DPLN), and 338–419 (GENV…LVVS). A disulfide bridge links C49 with C98. Residues 59–70 (RLHKEGSPEPLD) show a composition bias toward basic and acidic residues. Residues 59-78 (RLHKEGSPEPLDRNNPLEPK) form a disordered region. An N-linked (GlcNAc...) asparagine glycan is attached at N139. 2 cysteine pairs are disulfide-bonded: C144-C196 and C245-C296. N-linked (GlcNAc...) asparagine glycosylation is found at N280, N301, and N340. A disulfide bond links C345 and C396. The helical transmembrane segment at 444–464 (VLIGVSVAFVLLLFLLLFLLL) threads the bilayer. Topologically, residues 465–631 (RRQRHSKHRT…PSIYATLAIH (167 aa)) are cytoplasmic. A disordered region spans residues 470–631 (SKHRTSDQRK…PSIYATLAIH (162 aa)). Basic and acidic residues predominate over residues 473–482 (RTSDQRKTDF). Residues 512–517 (NLYAAV) carry the ITIM motif 1 motif. Basic and acidic residues-rich tracts occupy residues 520 to 537 (TQSEDRVELDSQSPHDED) and 567 to 581 (LDTKDRQVEEDRQMD). The span at 588-600 (EASQDVTYAQLHS) shows a compositional bias: polar residues. Short sequence motifs (ITIM motif) lie at residues 593–598 (VTYAQL) and 623–628 (SIYATL). Phosphotyrosine; by LYN is present on residues Y595 and Y625.

In terms of assembly, interacts with LYN, PTPN6/SHP-1 and PTPN11/SHP-2. In terms of processing, phosphorylated on tyrosine residues by LYN. Phosphorylation at Tyr-595 and Tyr-625 is important for interaction with PTPN6/SHP-1 and PTPN11/SHP-2. In terms of tissue distribution, detected in monocytes and B-cells.

Its subcellular location is the cell membrane. May act as receptor for class I MHC antigens. Becomes activated upon coligation of LILRB3 and immune receptors, such as FCGR2B and the B-cell receptor. Down-regulates antigen-induced B-cell activation by recruiting phosphatases to its immunoreceptor tyrosine-based inhibitor motifs (ITIM). This chain is Leukocyte immunoglobulin-like receptor subfamily B member 3 (LILRB3), found in Homo sapiens (Human).